The following is a 186-amino-acid chain: Auxin-responsive protein IAA4 (186 aa).

Residues 18-22 (LRLGL) carry the EAR-like (transcriptional repression) motif. The interval 25–62 (TEETVSCGKSNKRVLPEATEKEIESTGKTETASPPKAQ) is disordered. Positions 38–51 (VLPEATEKEIESTG) are enriched in basic and acidic residues. Positions 88–175 (GNYVKVSMDG…SCKRLRIMKG (88 aa)) constitute a PB1 domain.

It belongs to the Aux/IAA family. Homodimers and heterodimers. Interacts with TPL. In terms of tissue distribution, preferentially expressed in stems, leaves and flowers.

It localises to the nucleus. Functionally, aux/IAA proteins are short-lived transcriptional factors that function as repressors of early auxin response genes at low auxin concentrations. Repression is thought to result from the interaction with auxin response factors (ARFs), proteins that bind to the auxin-responsive promoter element (AuxRE). Formation of heterodimers with ARF proteins may alter their ability to modulate early auxin response genes expression. The chain is Auxin-responsive protein IAA4 (IAA4) from Arabidopsis thaliana (Mouse-ear cress).